The primary structure comprises 279 residues: Prostatic spermine-binding protein (279 aa).

The signal sequence occupies residues 1–17 (MLLLVTLALLAGPTCRA). A Pyrrolidone carboxylic acid modification is found at Gln-18. The 134-residue stretch at 18–151 (QNILGNNVGT…LNGMGFKWKN (134 aa)) folds into the Jacalin-type lectin domain. Asn-62 carries an N-linked (GlcNAc...) asparagine glycan. Composition is skewed to acidic residues over residues 160–177 (DDDK…NEED) and 185–279 (NDHD…EEEE). The interval 160-279 (DDDKEDDDDE…DDDNGDEEEE (120 aa)) is disordered.

This sequence to mouse SBP. In terms of tissue distribution, prostate.

Functionally, spermine-binding protein is an androgen regulated ventral prostate glycoprotein that binds various polyamines. The chain is Prostatic spermine-binding protein (Sbp) from Rattus norvegicus (Rat).